We begin with the raw amino-acid sequence, 584 residues long: Inactive metallocarboxypeptidase ECM14 (584 aa).

An N-terminal signal peptide occupies residues 1-20 (MHLLPVITAVALIYTPLASA). Residues 21–174 (VPSSSNPQFP…QAVYESYPQP (154 aa)) constitute a propeptide that is removed on maturation. Residues 202–524 (DYQPLSVMTP…NAVLEFGKFL (323 aa)) enclose the Peptidase M14 domain. Residues His267 and Glu270 each contribute to the Zn(2+) site. Substrate-binding positions include 267–270 (HARE), Arg325, and 342–343 (DR). Cys336 and Cys359 form a disulfide bridge. N-linked (GlcNAc...) asparagine glycosylation is found at Asn383 and Asn389. Residue His399 coordinates Zn(2+). Residue 400–401 (SY) coordinates substrate. Residues 564 to 584 (QQLDDEDGEADSHWVLRTQRS) are disordered.

The protein belongs to the peptidase M14 family. Requires Zn(2+) as cofactor.

The protein resides in the vacuole. Its subcellular location is the secreted. Its function is as follows. Inactive carboxypeptidase that may play a role in cell wall organization and biogenesis. The protein is Inactive metallocarboxypeptidase ECM14 (ECM14) of Uncinocarpus reesii (strain UAMH 1704).